Consider the following 588-residue polypeptide: MPLKLTRRQYAEMFGPTVGDRVRLADTDLLVEVERDLIAEGGGYGNEIKFGGGKVIRDGMGQSPTARDADSLDLIITNALILDSRLGVIKADLGIKHGLIVGIGHGGNPGIQSGLGSTFVDPRTGKKNPMIVGAATEVIAGEGCIVTAGGIDTHIHFICPQQIEEAISSGITTMLGGGTGPATGTFATTCTPGAWNLRRMIEAAEAYPMNLGFLAKGNCGTPAPLREQVLAGAIGLKLHEDWGTTPAAIDVCLGVADEFDVQVAIHTDTLNEAGFVEATIRAFKGRTIHTFHSEGAGGGHAPDIIRVCGEPNVLPSSTNPTRPFTVNTIDEHLDMLMVCHHLDTKIPEDVAFAESRIRPETIAAEDCLHDLGAISIMSSDSQAMGRVGEVIIRTWQTAHKMKQQFGALAGGAHPAADNFRALRYLAKYTINPAIAQGIAHVVGSLEVGKLADLVLFKPALFGVKPELVLKGGFIAWANMGDPNASIPTPQPTFYRPQFGAAGRALTSTSLTFVSQAALDHGTFRDAGLARRLEPVKHCRRIGKRDMVLNDALPHIEVDPETYTVKADGRVLTCEPARELPMAQRYFLF.

The Urease domain maps to 149-588; it reads GGIDTHIHFI…LPMAQRYFLF (440 aa). Residues H154, H156, and K237 each coordinate Ni(2+). K237 is modified (N6-carboxylysine). H239 provides a ligand contact to substrate. Ni(2+) is bound by residues H266 and H292. H340 acts as the Proton donor in catalysis. Ni(2+) is bound at residue D380.

This sequence belongs to the metallo-dependent hydrolases superfamily. Urease alpha subunit family. As to quaternary structure, heterotrimer of UreA (gamma), UreB (beta) and UreC (alpha) subunits. Three heterotrimers associate to form the active enzyme. The cofactor is Ni cation. Post-translationally, carboxylation allows a single lysine to coordinate two nickel ions.

The protein localises to the cytoplasm. It carries out the reaction urea + 2 H2O + H(+) = hydrogencarbonate + 2 NH4(+). It participates in nitrogen metabolism; urea degradation; CO(2) and NH(3) from urea (urease route): step 1/1. The sequence is that of Urease subunit alpha from Opitutus terrae (strain DSM 11246 / JCM 15787 / PB90-1).